A 93-amino-acid chain; its full sequence is Large ribosomal subunit protein bL31B (93 aa).

The protein belongs to the bacterial ribosomal protein bL31 family. Type B subfamily. Part of the 50S ribosomal subunit.

The polypeptide is Large ribosomal subunit protein bL31B (Psychrobacter cryohalolentis (strain ATCC BAA-1226 / DSM 17306 / VKM B-2378 / K5)).